A 346-amino-acid polypeptide reads, in one-letter code: MNKKSVLVIHGGAGVISKSTISKEREEIFLNSLKNILLAGKIILKQGGTSLDVVQEAVRLLEEDPIYNAGKGSVFTELGTNEMDAAIMDGTNLKAGAVGGVSIIRNPIIAARAVMEHTNHCLLVGKGAEEFAKSKNLEIVEPSFFFTQNRYDQLLRAKDEKKLILDHDGENLLEKEKEKEKNNETSTTTTTISVGVDPIDPKYKMGTVGAVCLDSFGNLAAATSTGGMTNKMHGRVGDTPIIGAGVYANKNVAVSSTGTGEAFMRTVAAFDIAAMMEYGSLSLKDASNKVVMEKLITVGDGGVICVDKYGNVEMPFNTEGMYRGYVIIDNNCENDQNDIINVSIYK.

Threonine 207 acts as the Nucleophile in catalysis. Residues 235–238 and 257–260 contribute to the substrate site; these read RVGD and TGTG.

This sequence belongs to the Ntn-hydrolases family. Heterodimer of an alpha and beta chain produced by autocleavage. In terms of processing, cleaved into an alpha and beta chain by autocatalysis; this activates the enzyme. The N-terminal residue of the beta subunit is responsible for the nucleophile hydrolase activity.

It catalyses the reaction Cleavage of a beta-linked Asp residue from the N-terminus of a polypeptide.. The enzyme catalyses L-asparagine + H2O = L-aspartate + NH4(+). Functionally, has both L-asparaginase and beta-aspartyl peptidase activity. Does not have aspartylglucosaminidase activity and is inactive toward GlcNAc-L-Asn. Likewise, has no activity toward glutamine. In Dictyostelium discoideum (Social amoeba), this protein is Putative isoaspartyl peptidase/L-asparaginase.